We begin with the raw amino-acid sequence, 74 residues long: Translation initiation factor IF-1, chloroplastic (74 aa).

The S1-like domain occupies 1–72 (MEKQNIIEME…TKGRITYRLR (72 aa)).

It belongs to the IF-1 family. In terms of assembly, component of the 30S ribosomal translation pre-initiation complex which assembles on the 30S ribosome in the order IF-2 and IF-3, IF-1 and N-formylmethionyl-tRNA(fMet); mRNA recruitment can occur at any time during PIC assembly.

Its subcellular location is the plastid. It is found in the chloroplast. Its function is as follows. One of the essential components for the initiation of protein synthesis. Stabilizes the binding of IF-2 and IF-3 on the 30S subunit to which N-formylmethionyl-tRNA(fMet) subsequently binds. Helps modulate mRNA selection, yielding the 30S pre-initiation complex (PIC). Upon addition of the 50S ribosomal subunit IF-1, IF-2 and IF-3 are released leaving the mature 70S translation initiation complex. The protein is Translation initiation factor IF-1, chloroplastic of Chlorokybus atmophyticus (Soil alga).